We begin with the raw amino-acid sequence, 390 residues long: Chorismate synthase 1 (390 aa).

The NADP(+) site is built by Arg-39 and Arg-45. The interval 95–117 is disordered; the sequence is EQEEKEMKRKVTKPRPGHADLNG. FMN-binding positions include 132-134, 253-254, Gly-298, 313-317, and Arg-339; these read RSS, NA, and KPIPT.

It belongs to the chorismate synthase family. Homotetramer. Requires FMNH2 as cofactor.

It carries out the reaction 5-O-(1-carboxyvinyl)-3-phosphoshikimate = chorismate + phosphate. The protein operates within metabolic intermediate biosynthesis; chorismate biosynthesis; chorismate from D-erythrose 4-phosphate and phosphoenolpyruvate: step 7/7. Catalyzes the anti-1,4-elimination of the C-3 phosphate and the C-6 proR hydrogen from 5-enolpyruvylshikimate-3-phosphate (EPSP) to yield chorismate, which is the branch point compound that serves as the starting substrate for the three terminal pathways of aromatic amino acid biosynthesis. This reaction introduces a second double bond into the aromatic ring system. This Bacillus cereus (strain ATCC 14579 / DSM 31 / CCUG 7414 / JCM 2152 / NBRC 15305 / NCIMB 9373 / NCTC 2599 / NRRL B-3711) protein is Chorismate synthase 1.